A 318-amino-acid chain; its full sequence is Esterase FVEG_12639 (318 aa).

Catalysis depends on residues Ser-156, Asp-255, and His-285.

This sequence belongs to the AB hydrolase 3 family.

In terms of biological role, esterase; part of the Fusarium detoxification of benzoxazolinone cluster 2 (FDB2) involved in the degradation of benzoxazolinones produced by the host plant. Maize, wheat, and rye produce the 2 benzoxazinone phytoanticipins 2,4-dihy-droxy-7-methoxy-1,4-benzoxazin-3-one (DIMBOA) and 2,4-dihydroxy-1,4-benzoxazin-3-one (DIBOA) that, due to their inherent instability once released, spontaneously degrade to the more stable corresponding benzoxazolinones, 6-methoxy-2-benzoxazolinone (MBOA) and 2-benzoxazolinone (BOA), respectively. The first step in the detoxification of benzoxazolinones involves the hydrolysis of the cyclic ester bond of benzoxazolinones by the FDB1 cluster gamma-lactamase MBL1 to aminophenols. MBL1 is able to convert BOA into 2-aminophenol (2-AP), as well as MBOA into 5-methoxy-2-aminophenol (2-AMP). The FDB2 cluster N-malonyltransferase FDB2/NAT1 then metabolizes aminophenols via N-malonylation to non-toxic malonamic acids. FDB2/NAT1 converts 2-AP into N-(2-hydroxyphenyl) malonamic acid (HPMA) and 2-AMP into N-(2-hydroxy-4-methoxyphenyl) malonamic acid (HMPMA). The duplicated dienlactone hydrolases DLH1 and DLH2 may provide redundant function for hydrolyzing the lactone moiety in the BOA molecule. The roles of the amidases an other enzymes encoded by the 2 FDB clusters have not been identified so far. This Gibberella moniliformis (strain M3125 / FGSC 7600) (Maize ear and stalk rot fungus) protein is Esterase FVEG_12639.